Reading from the N-terminus, the 141-residue chain is Large ribosomal subunit protein uL11 (141 aa).

The protein belongs to the universal ribosomal protein uL11 family. As to quaternary structure, part of the ribosomal stalk of the 50S ribosomal subunit. Interacts with L10 and the large rRNA to form the base of the stalk. L10 forms an elongated spine to which L12 dimers bind in a sequential fashion forming a multimeric L10(L12)X complex. Post-translationally, one or more lysine residues are methylated.

In terms of biological role, forms part of the ribosomal stalk which helps the ribosome interact with GTP-bound translation factors. This chain is Large ribosomal subunit protein uL11, found in Chlorobium phaeobacteroides (strain DSM 266 / SMG 266 / 2430).